A 299-amino-acid chain; its full sequence is tRNA dimethylallyltransferase (299 aa).

ATP is bound at residue Gly13–Thr20. Residue Thr15–Thr20 participates in substrate binding. The tract at residues Asp38 to Gln41 is interaction with substrate tRNA.

Belongs to the IPP transferase family. Monomer. Mg(2+) is required as a cofactor.

The catalysed reaction is adenosine(37) in tRNA + dimethylallyl diphosphate = N(6)-dimethylallyladenosine(37) in tRNA + diphosphate. In terms of biological role, catalyzes the transfer of a dimethylallyl group onto the adenine at position 37 in tRNAs that read codons beginning with uridine, leading to the formation of N6-(dimethylallyl)adenosine (i(6)A). In Prochlorococcus marinus (strain MIT 9301), this protein is tRNA dimethylallyltransferase.